A 420-amino-acid polypeptide reads, in one-letter code: Amino acid decarboxylase lolD1 (420 aa).

K62 is subject to N6-(pyridoxal phosphate)lysine. Pyridoxal 5'-phosphate-binding positions include S194, G231, and 266–269 (EPGT). 315-316 (IV) provides a ligand contact to substrate. The Proton donor; shared with dimeric partner role is filled by C351. At C351 the chain carries S-nitrosocysteine. D352 contributes to the substrate binding site. Y381 is a pyridoxal 5'-phosphate binding site.

This sequence belongs to the Orn/Lys/Arg decarboxylase class-II family. In terms of assembly, homodimer. Requires pyridoxal 5'-phosphate as cofactor.

The protein operates within alkaloid biosynthesis. Amino acid decarboxylase; part of the gene cluster that mediates the biosynthesis of loline alkaloids, potent insecticidal agents composed of a pyrrolizidine ring system and an uncommon ether bridge linking carbons 2 and 7. Lolines are structurally differentiated by the various modifications of the L-amino group and include norloline, loline, N-methylloline, N-acetylloline, N-acetylnorloline, and N-formylloline. The first committed step is the condensation of O-acetyl-L-homoserine (derived from L-aspartic acid) and L-proline, probably catalyzed by the gamma-type pyridoxal 5'-phosphate(PLP)-dependent enzyme lolC, to give the diamino diacid, NACPP. Ensuing cyclization, decarboxylation, and acetylation steps yield 1-exo-acetamidopyrrolizidine (AcAP). LolO is required for installation of the ether bridge upon the pathway intermediate, 1-exo-acetamidopyrrolizidine (AcAP). In sequential 2-oxoglutarate- and O(2)-consuming steps, lolO removes hydrogens from C2 and C7 of AcAP to form both carbon-oxygen bonds in N-acetylnorloline (NANL), the precursor to all other lolines. The enzymes lolD, lolE, lolF and lolT have also been proposed to be involved in the ether-bridge installation. Further processing of the exocyclic moiety of NANL by fungal N-acetamidase (LolN), methyltransferase (LolM), and cytochrome P450 (LolP) enzymes, with occasional involvement of a plant acetyltransferase, generates the other known lolines. LolN transforms NANL to norlonine which is monomethylated and dimethylated to respectively lonine and N-methyllonine (NML) by lolM. LolP catalyzes hydroxylation of the methyl group in N-methylloline (NML) and further oxygenation to N-formylloline (NFL). A plant acetyltransferase is responsible for the acetylation of loline to form N-acetylloline (NAL). LolA might interact with aspartate kinase to prevent feedback inhibition of its activity by these end products and thereby promote production of L-homoserine from L-aspartate. The chain is Amino acid decarboxylase lolD1 from Epichloe uncinata (Endophyte fungus).